The following is a 302-amino-acid chain: Probable proteasome inhibitor (302 aa).

Residue Ala-2 is modified to N-acetylalanine. Disordered regions lie at residues 151-188 (LDGK…QIHP) and 259-302 (ARFD…SDFI). A compositionally biased stretch (pro residues) spans 259-269 (ARFDPYGPPGV).

The protein belongs to the proteasome inhibitor PI31 family.

In terms of biological role, could play an important role in control of proteasome function. Inhibits the hydrolysis of protein and peptide substrates by the 20S proteasome. This chain is Probable proteasome inhibitor, found in Arabidopsis thaliana (Mouse-ear cress).